A 287-amino-acid chain; its full sequence is uncharacterized protein (287 aa).

Disordered regions lie at residues 109 to 175 (QEES…SSQD), 203 to 223 (IPPP…SQPV), and 257 to 287 (KESE…SSEE). The span at 110-136 (EESSSSLEEGIIEDPVVATPSPASAAP) shows a compositional bias: low complexity. Residues 143–152 (RKEFKNEKWK) show a composition bias toward basic and acidic residues. The segment covering 153–162 (EKKKQGRRRN) has biased composition (basic residues). Positions 273–287 (SLEEASVHDRISSEE) are enriched in basic and acidic residues.

This sequence belongs to the chlamydial CPn_0623/CT_504/TC_0791 family.

This is an uncharacterized protein from Chlamydia muridarum (strain MoPn / Nigg).